The chain runs to 410 residues: Protein translocase subunit SecY (410 aa).

Helical transmembrane passes span 61 to 81 (LSVF…IQIL), 106 to 126 (ITKY…VLRL), 135 to 155 (LYFI…VMWL), 170 to 190 (VIIF…QLFV), 195 to 215 (FLDF…IVFV), 248 to 268 (QGGV…DYVI), 289 to 309 (ILFL…YCSL), 349 to 369 (LFGS…EFVF), and 373 to 393 (VFKG…IDLI).

This sequence belongs to the SecY/SEC61-alpha family. In terms of assembly, component of the plastid Sec protein translocase complex, which is composed of at least SecY and SecE.

The protein resides in the plastid. It localises to the chloroplast thylakoid membrane. Functionally, the central subunit of the protein translocation channel SecYE. Consists of two halves formed by TMs 1-5 and 6-10. These two domains form a lateral gate at the front which open onto the bilayer between TMs 2 and 7, and are clamped together by SecE at the back. The channel is closed by both a pore ring composed of hydrophobic SecY resides and a short helix (helix 2A) on the extracellular side of the membrane which forms a plug. The chain is Protein translocase subunit SecY from Cyanidium caldarium (Red alga).